The chain runs to 72 residues: MSKVCVLTGKRPKYGNTVSHANNHRRTRFEPNLHTKRIWIEEEKRWAKVKLSAKAMRIIAKTGTGELAKLLK.

The protein belongs to the bacterial ribosomal protein bL28 family.

This Chlorobium phaeovibrioides (strain DSM 265 / 1930) (Prosthecochloris vibrioformis (strain DSM 265)) protein is Large ribosomal subunit protein bL28.